We begin with the raw amino-acid sequence, 197 residues long: dITP/XTP pyrophosphatase (197 aa).

A substrate-binding site is contributed by 8–13 (TKNKGK). Residues E42 and D71 each contribute to the Mg(2+) site. The Proton acceptor role is filled by D71. Substrate is bound by residues S72, 154–157 (FGYD), K177, and 182–183 (HR).

The protein belongs to the HAM1 NTPase family. Homodimer. The cofactor is Mg(2+).

The catalysed reaction is XTP + H2O = XMP + diphosphate + H(+). It carries out the reaction dITP + H2O = dIMP + diphosphate + H(+). The enzyme catalyses ITP + H2O = IMP + diphosphate + H(+). Pyrophosphatase that catalyzes the hydrolysis of nucleoside triphosphates to their monophosphate derivatives, with a high preference for the non-canonical purine nucleotides XTP (xanthosine triphosphate), dITP (deoxyinosine triphosphate) and ITP. Seems to function as a house-cleaning enzyme that removes non-canonical purine nucleotides from the nucleotide pool, thus preventing their incorporation into DNA/RNA and avoiding chromosomal lesions. This chain is dITP/XTP pyrophosphatase, found in Oceanobacillus iheyensis (strain DSM 14371 / CIP 107618 / JCM 11309 / KCTC 3954 / HTE831).